The sequence spans 796 residues: Ent-copalyl diphosphate synthase 4 (796 aa).

Residues 1-23 constitute a chloroplast transit peptide; the sequence is MSSSSIVTSLLRPTTAADGVLPR. Lys-240 is a substrate binding site. Mg(2+)-binding residues include Asp-371 and Asp-373. The DXDD motif signature appears at 371–374; sequence DVDD. Lys-457 is a binding site for substrate.

Belongs to the terpene synthase family. Tpsc subfamily. Mg(2+) is required as a cofactor. In terms of tissue distribution, highly expressed in leaves, and, at low levels, in stems, but barely in roots and flowers.

It is found in the plastid. The protein localises to the chloroplast. The enzyme catalyses (2E,6E,10E)-geranylgeranyl diphosphate = ent-copalyl diphosphate. It participates in secondary metabolite biosynthesis; terpenoid biosynthesis. Involved in the biosynthesis of ent-kaurene diterpenoids natural products such as oridonin, miltiradiene, eriocalyxin B and nezukol, known to exhibit antitumor, anti-inflammatory and antibacterial activities. Catalyzes the conversion of (2E,6E,10E)-geranylgeranyl diphosphate (GGPP) to ent-copalyl diphosphate (ent-CPP). This chain is Ent-copalyl diphosphate synthase 4, found in Isodon rubescens (Rabdosia rubescens).